The following is a 329-amino-acid chain: MSIEIRNVSKNFNAFKALDDINLDIQSGELVALLGPSGCGKTTLLRIIAGLETPDAGNIVFHGEDVSQHDVRDRNVGFVFQHYALFRHMTVFDNVAFGLRMKPKGERPGESAIKAKVHELLNMVQLDWLADRYPEQLSGGQRQRIALARALAVEPKILLLDEPFGALDAKVRKELRRWLARLHEEINLTSVFVTHDQEEAMEVADRIVVMNKGVIEQIGSPGEVYENPASDFVYHFLGDSNRLQLGNDQHLLFRPHEVSLSRSAVAEHRAAEVRDIRPLGAITRVTLKVDGQDELIEAEVVKDHDSLAGLARGETLYFKPKAFQPVANL.

Positions 3-237 constitute an ABC transporter domain; sequence IEIRNVSKNF…PASDFVYHFL (235 aa). 35–42 contributes to the ATP binding site; the sequence is GPSGCGKT.

It belongs to the ABC transporter superfamily. Sulfate/tungstate importer (TC 3.A.1.6) family. As to quaternary structure, the complex is composed of two ATP-binding proteins (CysA), two transmembrane proteins (CysT and CysW) and a solute-binding protein (CysP).

The protein resides in the cell inner membrane. It carries out the reaction sulfate(out) + ATP + H2O = sulfate(in) + ADP + phosphate + H(+). It catalyses the reaction thiosulfate(out) + ATP + H2O = thiosulfate(in) + ADP + phosphate + H(+). Its function is as follows. Part of the ABC transporter complex CysAWTP involved in sulfate/thiosulfate import. Responsible for energy coupling to the transport system. This Pseudomonas aeruginosa (strain ATCC 15692 / DSM 22644 / CIP 104116 / JCM 14847 / LMG 12228 / 1C / PRS 101 / PAO1) protein is Sulfate/thiosulfate import ATP-binding protein CysA.